The sequence spans 155 residues: RNA pyrophosphohydrolase (155 aa).

Residues 5–147 (KYRPNVAAII…KRQVYRQVIA (143 aa)) enclose the Nudix hydrolase domain. The Nudix box motif lies at 42 to 63 (GGIDEGETPLEALHRELLEEIG).

The protein belongs to the Nudix hydrolase family. RppH subfamily. A divalent metal cation serves as cofactor.

Its function is as follows. Accelerates the degradation of transcripts by removing pyrophosphate from the 5'-end of triphosphorylated RNA, leading to a more labile monophosphorylated state that can stimulate subsequent ribonuclease cleavage. This chain is RNA pyrophosphohydrolase, found in Helicobacter pylori (strain HPAG1).